The following is a 176-amino-acid chain: N,N-dimethyl phenylurea N-demethylase subunit beta (176 aa).

This sequence belongs to the bacterial ring-hydroxylating dioxygenase beta subunit family. As to quaternary structure, pdmA (subunit alpha) and PdmB (subunit beta) form the oxygenase component of a bacterial Rieske non-heme iron oxygenase (RO) system.

The catalysed reaction is a 1,1-dimethyl-3-phenylurea + 2 reduced [2Fe-2S]-[ferredoxin] + O2 + 2 H(+) = a 1-methyl-3-phenylurea + formaldehyde + 2 oxidized [2Fe-2S]-[ferredoxin] + H2O. It carries out the reaction isoproturon + 2 reduced [2Fe-2S]-[ferredoxin] + O2 + 2 H(+) = 1-methyl-3-[4-(propan-2-yl)phenyl]urea + formaldehyde + 2 oxidized [2Fe-2S]-[ferredoxin] + H2O. It catalyses the reaction chlorotoluron + 2 reduced [2Fe-2S]-[ferredoxin] + O2 + 2 H(+) = 3-(3-chloro-4-methylphenyl)-1-methylurea + formaldehyde + 2 oxidized [2Fe-2S]-[ferredoxin] + H2O. The enzyme catalyses metoxuron + 2 reduced [2Fe-2S]-[ferredoxin] + O2 + 2 H(+) = 3-(3-chloro-4-methoxylphenyl)-1-methylurea + formaldehyde + 2 oxidized [2Fe-2S]-[ferredoxin] + H2O. The catalysed reaction is monuron + 2 reduced [2Fe-2S]-[ferredoxin] + O2 + 2 H(+) = 3-(4-chlorophenyl)-1-methylurea + formaldehyde + 2 oxidized [2Fe-2S]-[ferredoxin] + H2O. It carries out the reaction diuron + 2 reduced [2Fe-2S]-[ferredoxin] + O2 + 2 H(+) = 3-(3,4-dichlorophenyl)-1-methylurea + formaldehyde + 2 oxidized [2Fe-2S]-[ferredoxin] + H2O. It catalyses the reaction fluometuron + 2 reduced [2Fe-2S]-[ferredoxin] + O2 + 2 H(+) = 3-[3-(trifluoromethyl)phenyl]-1-methylurea + formaldehyde + 2 oxidized [2Fe-2S]-[ferredoxin] + H2O. The enzyme catalyses fenuron + 2 reduced [2Fe-2S]-[ferredoxin] + O2 + 2 H(+) = 1-methyl-3-phenylurea + formaldehyde + 2 oxidized [2Fe-2S]-[ferredoxin] + H2O. Its pathway is xenobiotic degradation. Activity is stimulated in vitro by coexpression of a [3Fe-4S]-type ferredoxin. Part of the multicomponent N,N-dimethyl phenylurea N-demethylase responsible for the initial N-demethylation step during the bacterial metabolism of N,N-dimethyl-substituted phenylurea herbicides. Catalyzes the mono-N-demethylation of N,N-dimethyl-substituted phenylurea herbicides to their mono-N-demethylated derivatives. Is active on isoproturon (IPU), chlorotoluron, metoxuron, monoron, diuron, fluometuron and fenuron, but cannot transform the N-methoxy-N-methyl-substituted herbicides. The sequence is that of N,N-dimethyl phenylurea N-demethylase subunit beta from Sphingobium sp. (strain YBL2).